Consider the following 161-residue polypeptide: Putative 4-hydroxy-4-methyl-2-oxoglutarate aldolase (161 aa).

Substrate-binding positions include 77–80 and Arg-99; that span reads GGNL. Asp-100 is a binding site for a divalent metal cation.

This sequence belongs to the class II aldolase/RraA-like family. As to quaternary structure, homotrimer. Requires a divalent metal cation as cofactor.

It catalyses the reaction 4-hydroxy-4-methyl-2-oxoglutarate = 2 pyruvate. The enzyme catalyses oxaloacetate + H(+) = pyruvate + CO2. Catalyzes the aldol cleavage of 4-hydroxy-4-methyl-2-oxoglutarate (HMG) into 2 molecules of pyruvate. Also contains a secondary oxaloacetate (OAA) decarboxylase activity due to the common pyruvate enolate transition state formed following C-C bond cleavage in the retro-aldol and decarboxylation reactions. The sequence is that of Putative 4-hydroxy-4-methyl-2-oxoglutarate aldolase from Methylococcus capsulatus (strain ATCC 33009 / NCIMB 11132 / Bath).